A 220-amino-acid polypeptide reads, in one-letter code: GTP-binding nuclear protein GSP2/CNR2 (220 aa).

S2 is subject to N-acetylserine. A Phosphoserine modification is found at S2. The Small GTPase Ran-type domain maps to 10–174 (EVPTFKLVLV…LWLARKLAGN (165 aa)). 21–28 (DGGTGKTT) is a binding site for GTP. A switch-I region spans residues 40–48 (KKYIATIGV). Residues G71, 125–128 (NKVD), and 153–155 (SAK) each bind GTP. Residues 71-87 (GQEKFGGLRDGYYINAQ) form a switch-II region.

This sequence belongs to the small GTPase superfamily. Ran family. As to quaternary structure, found in a nuclear export complex with RanGTP, exportin and pre-miRNA.

The protein localises to the nucleus. Functionally, GTP-binding protein involved in nucleocytoplasmic transport. Required for the import of protein into the nucleus and also for RNA export. Not essential for cell viability. The chain is GTP-binding nuclear protein GSP2/CNR2 (GSP2) from Saccharomyces cerevisiae (strain ATCC 204508 / S288c) (Baker's yeast).